A 337-amino-acid chain; its full sequence is CMP-sialic acid transporter (337 aa).

Topologically, residues 1 to 9 (MAAPRDNVT) are cytoplasmic. A helical membrane pass occupies residues 10–30 (LLFKLYCLAVMTLMAAVYTIA). The Lumenal portion of the chain corresponds to 31–45 (LRYTRTSDKELYFST). The chain crosses the membrane as a helical span at residues 46 to 64 (TAVCITEVIKLLLSVGILA). Lys-55 provides a ligand contact to CMP-N-acetyl-beta-neuraminate. The Cytoplasmic portion of the chain corresponds to 65 to 87 (KETGSLGRFKASLRENVLGSPKE). The helical transmembrane segment at 88-108 (LLKLSVPSLVYAVQNNMAFLA) threads the bilayer. Position 101–102 (101–102 (QN)) interacts with CMP-N-acetyl-beta-neuraminate. The Lumenal segment spans residues 109–114 (LSNLDA). Residues 115–135 (AVYQVTYQLKIPCTALCTVLM) form a helical membrane-spanning segment. 117-124 (YQVTYQLK) serves as a coordination point for CMP-N-acetyl-beta-neuraminate. Residues 136-141 (LNRTLS) lie on the Cytoplasmic side of the membrane. The helical transmembrane segment at 142 to 160 (KLQWVSVFMLCAGVTLVQW) threads the bilayer. Topologically, residues 161 to 175 (KPAQATKVVVEQNPL) are lumenal. A helical transmembrane segment spans residues 176 to 196 (LGFGAIAIAVLCSGFAGVYFE). Ser-188 serves as a coordination point for CMP-N-acetyl-beta-neuraminate. Residues 197–209 (KVLKSSDTSLWVR) lie on the Cytoplasmic side of the membrane. 210 to 214 (NIQMY) serves as a coordination point for CMP-N-acetyl-beta-neuraminate. Residues 210 to 228 (NIQMYLSGIIVTLAGVYLS) form a helical membrane-spanning segment. Residues 229–243 (DGAEIKEKGFFYGYT) lie on the Lumenal side of the membrane. The helical transmembrane segment at 244 to 262 (YYVWFVIFLASVGGLYTSV) threads the bilayer. The Cytoplasmic segment spans residues 263-269 (VVKYTDN). A helical transmembrane segment spans residues 270–288 (IMKGFSAAAAIVLSTIASV). CMP-N-acetyl-beta-neuraminate is bound at residue Lys-272. Residues 289–296 (MLFGLQIT) lie on the Lumenal side of the membrane. Residues 297–315 (LTFALGTLLVCVSIYLYGL) traverse the membrane as a helical segment. Residues 316–337 (PRQDTTSIQQGETASKERVIGV) lie on the Cytoplasmic side of the membrane. The disordered stretch occupies residues 316–337 (PRQDTTSIQQGETASKERVIGV).

It belongs to the nucleotide-sugar transporter family. SLC35A subfamily. In terms of assembly, monomer.

The protein resides in the golgi apparatus membrane. It is found in the golgi apparatus. It carries out the reaction CMP-N-acetyl-beta-neuraminate(in) + CMP(out) = CMP-N-acetyl-beta-neuraminate(out) + CMP(in). The catalysed reaction is CMP-N-acetyl-beta-neuraminate(in) + AMP(out) = CMP-N-acetyl-beta-neuraminate(out) + AMP(in). The enzyme catalyses CDP-L-ribitol(in) + CDP(out) = CDP-L-ribitol(out) + CDP(in). It catalyses the reaction UMP(out) + CMP-N-acetyl-beta-neuraminate(in) = UMP(in) + CMP-N-acetyl-beta-neuraminate(out). Transports CMP-sialic acid from the cytosol into the Golgi apparatus, functioning as an antiporter that exchanges CMP-sialic acid for CMP. Binds both CMP-sialic acid and free CMP, but has higher affinity for free CMP. Also able to exchange CMP-sialic acid for AMP and UMP. Also mediates the transport of CDP-ribitol. The chain is CMP-sialic acid transporter from Homo sapiens (Human).